The chain runs to 180 residues: ATP-dependent protease subunit HslV (180 aa).

The active site involves T9. Na(+) is bound by residues A164, C167, and T170.

This sequence belongs to the peptidase T1B family. HslV subfamily. A double ring-shaped homohexamer of HslV is capped on each side by a ring-shaped HslU homohexamer. The assembly of the HslU/HslV complex is dependent on binding of ATP.

The protein resides in the cytoplasm. It carries out the reaction ATP-dependent cleavage of peptide bonds with broad specificity.. Its activity is regulated as follows. Allosterically activated by HslU binding. Its function is as follows. Protease subunit of a proteasome-like degradation complex believed to be a general protein degrading machinery. In Leptospira borgpetersenii serovar Hardjo-bovis (strain JB197), this protein is ATP-dependent protease subunit HslV.